The primary structure comprises 302 residues: Glutaminase (302 aa).

Positions 61, 111, 155, 162, 186, 238, and 256 each coordinate substrate.

This sequence belongs to the glutaminase family. As to quaternary structure, homotetramer.

The catalysed reaction is L-glutamine + H2O = L-glutamate + NH4(+). The polypeptide is Glutaminase (Pseudomonas savastanoi pv. phaseolicola (strain 1448A / Race 6) (Pseudomonas syringae pv. phaseolicola (strain 1448A / Race 6))).